The sequence spans 164 residues: SsrA-binding protein (164 aa).

This sequence belongs to the SmpB family.

The protein resides in the cytoplasm. Functionally, required for rescue of stalled ribosomes mediated by trans-translation. Binds to transfer-messenger RNA (tmRNA), required for stable association of tmRNA with ribosomes. tmRNA and SmpB together mimic tRNA shape, replacing the anticodon stem-loop with SmpB. tmRNA is encoded by the ssrA gene; the 2 termini fold to resemble tRNA(Ala) and it encodes a 'tag peptide', a short internal open reading frame. During trans-translation Ala-aminoacylated tmRNA acts like a tRNA, entering the A-site of stalled ribosomes, displacing the stalled mRNA. The ribosome then switches to translate the ORF on the tmRNA; the nascent peptide is terminated with the 'tag peptide' encoded by the tmRNA and targeted for degradation. The ribosome is freed to recommence translation, which seems to be the essential function of trans-translation. The protein is SsrA-binding protein of Corynebacterium glutamicum (strain R).